We begin with the raw amino-acid sequence, 518 residues long: Bifunctional purine biosynthesis protein PurH (518 aa).

The region spanning 1-144 is the MGS-like domain; the sequence is MNRRAVLSVS…KNQERVSIVV (144 aa).

The protein belongs to the PurH family.

It carries out the reaction (6R)-10-formyltetrahydrofolate + 5-amino-1-(5-phospho-beta-D-ribosyl)imidazole-4-carboxamide = 5-formamido-1-(5-phospho-D-ribosyl)imidazole-4-carboxamide + (6S)-5,6,7,8-tetrahydrofolate. The enzyme catalyses IMP + H2O = 5-formamido-1-(5-phospho-D-ribosyl)imidazole-4-carboxamide. It functions in the pathway purine metabolism; IMP biosynthesis via de novo pathway; 5-formamido-1-(5-phospho-D-ribosyl)imidazole-4-carboxamide from 5-amino-1-(5-phospho-D-ribosyl)imidazole-4-carboxamide (10-formyl THF route): step 1/1. The protein operates within purine metabolism; IMP biosynthesis via de novo pathway; IMP from 5-formamido-1-(5-phospho-D-ribosyl)imidazole-4-carboxamide: step 1/1. In Desulfitobacterium hafniense (strain DSM 10664 / DCB-2), this protein is Bifunctional purine biosynthesis protein PurH.